The chain runs to 744 residues: Collagen alpha-1(VIII) chain (744 aa).

Positions 1–27 (MAVLPGPLQLLGVLLTISLSSIRLIQA) are cleaved as a signal peptide. The segment at 29–117 (AYYGIKPLPP…GKEIPLASLR (89 aa)) is nonhelical region (NC2). Disordered stretches follow at residues 115–393 (SLRG…GEPG) and 459–589 (GPKG…PDMG). The interval 118–571 (GEQGPRGEPG…PGPPGPPGPP (454 aa)) is triple-helical region (COL1). Pro residues predominate over residues 128–137 (PRGPPGPPGL). Over residues 168–178 (KPGAMGMPGAK) the composition is skewed to low complexity. 2 stretches are compositionally biased toward gly residues: residues 203 to 217 (GLPGIGKPGGPGLPG) and 328 to 337 (GFPGGKGEQG). Composition is skewed to low complexity over residues 466–496 (QKGVPGLPGVPGLLGPKGEPGIPGDQGLQGP) and 538–556 (AGLHGPPGKPGALGPQGQP). Residues 558-581 (LPGPPGPPGPPGPPAVMPPTPPPQ) show a composition bias toward pro residues. A nonhelical region (NC1) region spans residues 572 to 744 (AVMPPTPPPQ…SFSGYLLYPM (173 aa)). Residues 611–744 (PAYEMPAFTA…SFSGYLLYPM (134 aa)) form the C1q domain.

As to quaternary structure, homotrimers, or heterotrimers in association with alpha 2(VIII) type collagens. Four homotrimers can form a tetrahedron stabilized by central interacting C-terminal NC1 trimers. Prolines at the third position of the tripeptide repeating unit (G-X-Y) are hydroxylated in some or all of the chains. Post-translationally, proteolytically cleaved by neutrophil elastase, in vitro. Proteolytic processing produces the C-terminal NC1 domain fragment, vastatin. Expressed primarily in the subendothelium of large blood vessels. Also expressed in arterioles and venules in muscle, heart, kidney, spleen, umbilical cord, liver and lung and is also found in connective tissue layers around hair follicles, around nerve bundles in muscle, in the dura of the optic nerve, in cornea and sclera, and in the perichondrium of cartilaginous tissues. In the kidney, expressed in mesangial cells, glomerular endothelial cells, and tubular epithelial cells. Also expressed in mast cells, and in astrocytes during the repair process. Expressed in Descemet's membrane. Specifically expressed in peritoneal fibroblasts and mesothelial cells.

Its subcellular location is the secreted. It localises to the extracellular space. It is found in the extracellular matrix. The protein resides in the basement membrane. Functionally, macromolecular component of the subendothelium. Major component of the Descemet's membrane (basement membrane) of corneal endothelial cells. Also a component of the endothelia of blood vessels. Necessary for migration and proliferation of vascular smooth muscle cells and thus, has a potential role in the maintenance of vessel wall integrity and structure, in particular in atherogenesis. In terms of biological role, vastatin, the C-terminal fragment comprising the NC1 domain, inhibits aortic endothelial cell proliferation and causes cell apoptosis. This is Collagen alpha-1(VIII) chain (COL8A1) from Homo sapiens (Human).